We begin with the raw amino-acid sequence, 376 residues long: CYP enzymes assisting alcohol dehydrogenase (376 aa).

Residues Cys43, Thr45, His64, Cys94, Cys97, Cys100, Cys108, and Cys173 each coordinate Zn(2+). Thr45 contacts NAD(+). 2 residues coordinate substrate: Thr45 and His64. Residues 199-204 (GLGAVG), Asp223, Lys228, 294-296 (LGA), Phe320, and Lys371 contribute to the NAD(+) site.

It belongs to the zinc-containing alcohol dehydrogenase family. Class-III subfamily. In terms of assembly, homodimer. Requires Zn(2+) as cofactor.

It participates in alkaloid biosynthesis. Functionally, may be a positive catalyzer of strictosidine production by assisting secologanin biosynthesis, thus being involved in monoterpene indole alkaloids accumulation. The sequence is that of CYP enzymes assisting alcohol dehydrogenase from Catharanthus roseus (Madagascar periwinkle).